A 744-amino-acid polypeptide reads, in one-letter code: Elongation factor G, mitochondrial (744 aa).

Residues Met-1–Ala-33 constitute a mitochondrion transit peptide. Residues Glu-39–Glu-317 enclose the tr-type G domain. GTP-binding positions include Ala-48–Thr-55, Asp-115–His-119, and Asn-169–Asp-172.

The protein belongs to the TRAFAC class translation factor GTPase superfamily. Classic translation factor GTPase family. EF-G/EF-2 subfamily.

The protein resides in the mitochondrion. Its pathway is protein biosynthesis; polypeptide chain elongation. Functionally, mitochondrial GTPase that catalyzes the GTP-dependent ribosomal translocation step during translation elongation. During this step, the ribosome changes from the pre-translocational (PRE) to the post-translocational (POST) state as the newly formed A-site-bound peptidyl-tRNA and P-site-bound deacylated tRNA move to the P and E sites, respectively. Catalyzes the coordinated movement of the two tRNA molecules, the mRNA and conformational changes in the ribosome. The chain is Elongation factor G, mitochondrial from Anopheles gambiae (African malaria mosquito).